A 133-amino-acid chain; its full sequence is Small ribosomal subunit protein uS8 (133 aa).

It belongs to the universal ribosomal protein uS8 family. In terms of assembly, part of the 30S ribosomal subunit. Contacts proteins S5 and S12.

Its function is as follows. One of the primary rRNA binding proteins, it binds directly to 16S rRNA central domain where it helps coordinate assembly of the platform of the 30S subunit. This chain is Small ribosomal subunit protein uS8, found in Chlorobaculum parvum (strain DSM 263 / NCIMB 8327) (Chlorobium vibrioforme subsp. thiosulfatophilum).